Consider the following 416-residue polypeptide: Serine hydroxymethyltransferase (416 aa).

Residues Leu119 and 123–125 each bind (6S)-5,6,7,8-tetrahydrofolate; that span reads GHL. Lys228 is subject to N6-(pyridoxal phosphate)lysine. Glu243 contributes to the (6S)-5,6,7,8-tetrahydrofolate binding site.

This sequence belongs to the SHMT family. As to quaternary structure, homodimer. It depends on pyridoxal 5'-phosphate as a cofactor.

Its subcellular location is the cytoplasm. The enzyme catalyses (6R)-5,10-methylene-5,6,7,8-tetrahydrofolate + glycine + H2O = (6S)-5,6,7,8-tetrahydrofolate + L-serine. It participates in one-carbon metabolism; tetrahydrofolate interconversion. It functions in the pathway amino-acid biosynthesis; glycine biosynthesis; glycine from L-serine: step 1/1. In terms of biological role, catalyzes the reversible interconversion of serine and glycine with tetrahydrofolate (THF) serving as the one-carbon carrier. This reaction serves as the major source of one-carbon groups required for the biosynthesis of purines, thymidylate, methionine, and other important biomolecules. Also exhibits THF-independent aldolase activity toward beta-hydroxyamino acids, producing glycine and aldehydes, via a retro-aldol mechanism. The chain is Serine hydroxymethyltransferase from Desulforapulum autotrophicum (strain ATCC 43914 / DSM 3382 / VKM B-1955 / HRM2) (Desulfobacterium autotrophicum).